A 482-amino-acid polypeptide reads, in one-letter code: PAN domain-containing protein At5g03700 (482 aa).

The signal sequence occupies residues 1 to 31; it reads MEGLCLNSFTRVLLLLFVFLVFSHKWQRVNA. The PAN domain occupies 330 to 411; it reads CDKTTEFKVV…SKLGYFKVRE (82 aa). Cystine bridges form between cysteine 363-cysteine 385 and cysteine 367-cysteine 373. Residues 425–445 traverse the membrane as a helical segment; that stretch reads GMSLLAVIALVLMVAMVYVGF.

It is found in the membrane. The polypeptide is PAN domain-containing protein At5g03700 (Arabidopsis thaliana (Mouse-ear cress)).